Reading from the N-terminus, the 422-residue chain is Synaptotagmin-2 (422 aa).

The interval 1–43 is disordered; the sequence is MRNIFKRNQEPNVAPATTTATMPLAPVAPADNSTESTGPGESQ. Over 1–60 the chain is Vesicular; sequence MRNIFKRNQEPNVAPATTTATMPLAPVAPADNSTESTGPGESQEDMFAKLKEKFFNEINK. Residues 14-30 show a composition bias toward low complexity; it reads APATTTATMPLAPVAPA. The span at 31–40 shows a compositional bias: polar residues; that stretch reads DNSTESTGPG. Residue N32 is glycosylated (N-linked (GlcNAc...) asparagine). Residues 61 to 87 traverse the membrane as a helical segment; it reads IPLPPWALIAMAVVAGLLLLTCCFCIC. Residues 88-422 are Cytoplasmic-facing; it reads KKCCCKKKKN…EVDALLGKNK (335 aa). Residues 102-141 form a disordered region; the sequence is GKGMKNAMNMKDMKGGQDDDDAETGLTEGEGEGEEEKEPE. Residues 119-139 show a composition bias toward acidic residues; it reads DDDDAETGLTEGEGEGEEEKE. 2 positions are modified to phosphothreonine: T125 and T128. Residues 136 to 382 form a phospholipid binding region; it reads EEKEPENLGK…AIGKIFVGSN (247 aa). C2 domains lie at 142–261 and 273–406; these read NLGK…EEWR and KLGD…AQWH. Ca(2+) is bound by residues L172, D173, and D179. A Phosphothreonine modification is found at T202. The residue at position 230 (Y230) is a Phosphotyrosine. D231, F232, D233, S236, K237, D239, D304, D310, D364, and D366 together coordinate Ca(2+). Position 386 is a phosphothreonine (T386).

It belongs to the synaptotagmin family. As to quaternary structure, homotetramer. Heterodimer; heterodimerizes with SYT1 in presence of calcium. Interacts with SCAMP5. Interacts with STON2. Interacts with PRRT2. In terms of assembly, (Microbial infection) Interacts with C.botulinum neurotoxin type B (BoNT/B, botB). (Microbial infection) Interacts with C.botulinum neurotoxin type G (BoNT/G, botG). Requires Ca(2+) as cofactor. Post-translationally, phosphorylation at Thr-202 by WNK1, changes the calcium requirement for SYT2-binding to phospholipid membranes.

The protein localises to the cytoplasmic vesicle. The protein resides in the secretory vesicle. Its subcellular location is the synaptic vesicle membrane. It localises to the chromaffin granule membrane. It is found in the cytoplasm. Its function is as follows. Exhibits calcium-dependent phospholipid and inositol polyphosphate binding properties. May have a regulatory role in the membrane interactions during trafficking of synaptic vesicles at the active zone of the synapse. Plays a role in dendrite formation by melanocytes. Functionally, (Microbial infection) Receptor for C.botulinum neurotoxin type B (BoNT/B, botB); interaction is improved in the presence of gangliosides. The toxin binds via the vesicular domain (residues 47-60). (Microbial infection) Receptor for C.botulinum neurotoxin type G (BoNT/G, botG); gangliosides are not required for (or only very slightly improve) binding to a membrane-anchored receptor fragment. The toxin binds via the vesicular domain (residues 47-55). This is Synaptotagmin-2 from Mus musculus (Mouse).